We begin with the raw amino-acid sequence, 540 residues long: Aquaporin-5 (540 aa).

A disordered region spans residues 1 to 224 (MSGEGTDLPT…ESIDGYNYES (224 aa)). At 1 to 263 (MSGEGTDLPT…QWMNSNFKNH (263 aa)) the chain is on the cytoplasmic side. The span at 25 to 44 (PGSSQQQLVPIAHTISSPSK) shows a compositional bias: polar residues. Basic and acidic residues-rich tracts occupy residues 119 to 133 (RARE…EREN), 140 to 155 (RARD…ERSR), 174 to 194 (YFDD…KGMR), and 204 to 214 (SGEKVRRKSTD). Residues 264–284 (FVATIGEFVGTTMFLFFAFAG) form a helical membrane-spanning segment. The Extracellular segment spans residues 285 to 308 (TQVANIDSNTVNTTTGAATGFNIA). Asn-296 carries N-linked (GlcNAc...) asparagine glycosylation. The chain crosses the membrane as a helical span at residues 309-329 (VQLYIAVIFGFSLMVNVWIFF). Residues 330–332 (RIS) lie on the Cytoplasmic side of the membrane. Residues 333 to 353 (GGLFNPAVTLGMVLVGAIPIP) form a helical membrane-spanning segment. Topologically, residues 354-356 (RAA) are extracellular. A helical membrane pass occupies residues 357-377 (CLFFAQILGGIAASGMVLGLF). Over 378–393 (PTTFNVRTTLGASTST) the chain is Cytoplasmic. The chain crosses the membrane as a helical span at residues 394-414 (VQGVFIEAILTAELVFTIFML). Over 415 to 420 (AKEKHK) the chain is Extracellular. A helical transmembrane segment spans residues 421–441 (ATFIAPVGIGLALFIAEMVGV). At 442 to 467 (YYTGGSLNPARSFGPCVVSGSFDKEH) the chain is on the cytoplasmic side. The chain crosses the membrane as a helical span at residues 468-488 (WIYWIGPITGTFIAVFFYKFI). The Extracellular segment spans residues 489–540 (KMLEYEMANPGQDGDAKNDPTQNEKKREQILEERNRRYEKRNGSLRPGSRLS). The interval 499–540 (GQDGDAKNDPTQNEKKREQILEERNRRYEKRNGSLRPGSRLS) is disordered. Over residues 502–530 (GDAKNDPTQNEKKREQILEERNRRYEKRN) the composition is skewed to basic and acidic residues. N-linked (GlcNAc...) asparagine glycosylation is present at Asn-530.

It belongs to the MIP/aquaporin (TC 1.A.8) family.

Its subcellular location is the membrane. The enzyme catalyses H2O(in) = H2O(out). In terms of biological role, water channel required to facilitate the transport of water across membranes. May play a role in the vegetative growth. This is Aquaporin-5 from Botryotinia fuckeliana (strain B05.10) (Noble rot fungus).